The primary structure comprises 211 residues: Large ribosomal subunit protein uL3 (211 aa).

The tract at residues 122–156 (NQKRNNFGRGPMSHGSKNHRAPGSIGAGTTPGRVY) is disordered.

Belongs to the universal ribosomal protein uL3 family. As to quaternary structure, part of the 50S ribosomal subunit. Forms a cluster with proteins L14 and L19.

Its function is as follows. One of the primary rRNA binding proteins, it binds directly near the 3'-end of the 23S rRNA, where it nucleates assembly of the 50S subunit. The chain is Large ribosomal subunit protein uL3 from Nostoc sp. (strain PCC 7120 / SAG 25.82 / UTEX 2576).